The following is a 474-amino-acid chain: Cryptochrome DASH (474 aa).

The Photolyase/cryptochrome alpha/beta domain maps to 2–136; it reads DTAVVWFRDD…ALRQRWTHTL (135 aa). The segment covering 161-171 has biased composition (basic and acidic residues); that stretch reads EAAATVRDPRS. The segment at 161–202 is disordered; that stretch reads EAAATVRDPRSAPETVPTPDGLTPGPVPTVESLGVSEPPTDD.

It belongs to the DNA photolyase class-1 family. FAD is required as a cofactor. (6R)-5,10-methylene-5,6,7,8-tetrahydrofolate serves as cofactor.

Its function is as follows. May have a photoreceptor function. Binds DNA; probably functions as a transcriptional repressor. This Natronomonas pharaonis (strain ATCC 35678 / DSM 2160 / CIP 103997 / JCM 8858 / NBRC 14720 / NCIMB 2260 / Gabara) (Halobacterium pharaonis) protein is Cryptochrome DASH (cry).